Reading from the N-terminus, the 154-residue chain is Keratin-associated protein 9-4 (154 aa).

Tandem repeats lie at residues 8-12 (CCQPT), 13-17 (CCRTT), 18-22 (CCRTT), 37-41 (CCQPS), 42-46 (CCVSS), 51-55 (CCRPT), 56-60 (CCQNT), 61-65 (CCQPT), 70-74 (CCQPS), 75-79 (CCSTP), 80-84 (CCQPT), 85-89 (CCGSS), 129-133 (CCRPA), 134-138 (CCETT), and 148-152 (CCQPF). The interval 8-152 (CCQPTCCRTT…TCVSSCCQPF (145 aa)) is 15 X 5 AA repeats of C-C-[RQVGE]-[SPTN]-[TASPF].

It belongs to the KRTAP type 9 family. As to quaternary structure, interacts with hair keratins.

Its function is as follows. In the hair cortex, hair keratin intermediate filaments are embedded in an interfilamentous matrix, consisting of hair keratin-associated proteins (KRTAP), which are essential for the formation of a rigid and resistant hair shaft through their extensive disulfide bond cross-linking with abundant cysteine residues of hair keratins. The matrix proteins include the high-sulfur and high-glycine-tyrosine keratins. The protein is Keratin-associated protein 9-4 (KRTAP9-4) of Homo sapiens (Human).